Here is a 525-residue protein sequence, read N- to C-terminus: Bifunctional purine biosynthesis protein PurH (525 aa).

Residues 10–156 (HRIPIRRALV…KNHPSVAIVT (147 aa)) enclose the MGS-like domain.

The protein belongs to the PurH family.

The enzyme catalyses (6R)-10-formyltetrahydrofolate + 5-amino-1-(5-phospho-beta-D-ribosyl)imidazole-4-carboxamide = 5-formamido-1-(5-phospho-D-ribosyl)imidazole-4-carboxamide + (6S)-5,6,7,8-tetrahydrofolate. The catalysed reaction is IMP + H2O = 5-formamido-1-(5-phospho-D-ribosyl)imidazole-4-carboxamide. The protein operates within purine metabolism; IMP biosynthesis via de novo pathway; 5-formamido-1-(5-phospho-D-ribosyl)imidazole-4-carboxamide from 5-amino-1-(5-phospho-D-ribosyl)imidazole-4-carboxamide (10-formyl THF route): step 1/1. It functions in the pathway purine metabolism; IMP biosynthesis via de novo pathway; IMP from 5-formamido-1-(5-phospho-D-ribosyl)imidazole-4-carboxamide: step 1/1. This chain is Bifunctional purine biosynthesis protein PurH, found in Nocardioides sp. (strain ATCC BAA-499 / JS614).